The primary structure comprises 599 residues: Putative fused cobalt transport protein CbiMQ (599 aa).

The interval 1-239 (MHIMEGFLPS…LLPSSDQNLS (239 aa)) is cbiM. 16 helical membrane-spanning segments follow: residues 12–32 (WWQF…AALI), 44–64 (LLGL…PSVG), 74–94 (FGAI…VLVF), 106–126 (TLGA…CIIF), 140–160 (SFSV…YMMT), 162–182 (LQLA…FVVY), 183–203 (LGIF…LIVL), 247–267 (IIAG…LAGL), 303–323 (WLFA…LYLL), 356–376 (QVSA…GVTS), 377–397 (PLPY…LIIA), 407–427 (LLTI…LITG), 438–458 (IGAF…LVLS), 463–483 (GMCS…FSVL), 493–513 (IDLS…AIAI), and 579–599 (MAVF…MLLL). A cbiQ region spans residues 341 to 599 (DEHILDDVAI…GLLCAEMLLL (259 aa)).

It in the N-terminal section; belongs to the CbiM family. This sequence in the C-terminal section; belongs to the CbiQ family. As to quaternary structure, forms an energy-coupling factor (ECF) transporter complex composed of an ATP-binding protein (A component, CbiO), a transmembrane protein (T component, CbiQ) and 2 possible substrate-capture proteins (S components, CbiM and CbiN) of unknown stoichimetry.

The protein localises to the cell membrane. It participates in cofactor biosynthesis; adenosylcobalamin biosynthesis. Functionally, part of the energy-coupling factor (ECF) transporter complex CbiMNOQ involved in cobalt import. The polypeptide is Putative fused cobalt transport protein CbiMQ (cbiMQ) (Methanocorpusculum labreanum (strain ATCC 43576 / DSM 4855 / Z)).